Consider the following 515-residue polypeptide: Putative pumilio homolog 8, chloroplastic (515 aa).

Residues 1-33 are disordered; it reads MMRGEFGEASSLSRSPSSPLQTEPHPQSPKFYR. Residues 1-70 constitute a chloroplast transit peptide; that stretch reads MMRGEFGEAS…LSSYFSNGLC (70 aa). A compositionally biased stretch (low complexity) spans 10 to 20; sequence SSLSRSPSSPL. In terms of domain architecture, PUM-HD spans 174 to 515; it reads SGVGALFDHQ…RIFSRNLLKN (342 aa). Pumilio repeat units follow at residues 198-233, 234-269, 270-308, 310-345, 346-381, 382-417, 418-456, and 457-490; these read EFQG…VIFS, EVIP…QIIL, MVTS…SLVK, ALRP…FIFE, DATK…KLVT, EISR…AMLA, QLKG…ELIS, and VPHF…TLVE.

Its subcellular location is the plastid. The protein localises to the chloroplast. The protein resides in the cytoplasm. Functionally, sequence-specific RNA-binding protein that regulates translation and mRNA stability by binding the 3'-UTR of target mRNAs. The polypeptide is Putative pumilio homolog 8, chloroplastic (APUM8) (Arabidopsis thaliana (Mouse-ear cress)).